The primary structure comprises 901 residues: Alanine--tRNA ligase (901 aa).

Positions 581, 585, 684, and 688 each coordinate Zn(2+).

Belongs to the class-II aminoacyl-tRNA synthetase family. The cofactor is Zn(2+).

It localises to the cytoplasm. It carries out the reaction tRNA(Ala) + L-alanine + ATP = L-alanyl-tRNA(Ala) + AMP + diphosphate. In terms of biological role, catalyzes the attachment of alanine to tRNA(Ala) in a two-step reaction: alanine is first activated by ATP to form Ala-AMP and then transferred to the acceptor end of tRNA(Ala). Also edits incorrectly charged Ser-tRNA(Ala) and Gly-tRNA(Ala) via its editing domain. This chain is Alanine--tRNA ligase, found in Mycobacterium marinum (strain ATCC BAA-535 / M).